The chain runs to 132 residues: Ribosome-binding factor A (132 aa).

The protein belongs to the RbfA family. As to quaternary structure, monomer. Binds 30S ribosomal subunits, but not 50S ribosomal subunits or 70S ribosomes.

The protein localises to the cytoplasm. Functionally, one of several proteins that assist in the late maturation steps of the functional core of the 30S ribosomal subunit. Associates with free 30S ribosomal subunits (but not with 30S subunits that are part of 70S ribosomes or polysomes). Required for efficient processing of 16S rRNA. May interact with the 5'-terminal helix region of 16S rRNA. The chain is Ribosome-binding factor A from Pectobacterium atrosepticum (strain SCRI 1043 / ATCC BAA-672) (Erwinia carotovora subsp. atroseptica).